Consider the following 407-residue polypeptide: Gonadotropin-releasing hormone receptor (407 aa).

Residues 1 to 36 lie on the Extracellular side of the membrane; sequence MDYLNDSMFNNMTYNITSTPLPDAPRFDNVYVSKLC. N5, N11, and N15 each carry an N-linked (GlcNAc...) asparagine glycan. Residues 37–57 form a helical membrane-spanning segment; sequence VLGTVFVISFFGNTLVIIQIF. At 58–69 the chain is on the cytoplasmic side; sequence RIRGSRSTIQSL. A helical transmembrane segment spans residues 70–90; sequence ILNLAIADLMVSFFNILMDII. Over 91–105 the chain is Extracellular; the sequence is WSATVEWLAGNTMCK. A disulfide bond links C104 and C183. Residues 106–126 traverse the membrane as a helical segment; sequence IMKYLTVFGLHLSTYITVSIA. Residues 127-147 are Cytoplasmic-facing; the sequence is LDRCFAILSPMSRSKAPLRVR. A helical membrane pass occupies residues 148-168; it reads IMITMAWVLSAIFSIPQAVIF. The Extracellular segment spans residues 169–199; sequence QEQRKMFRQGMFHQCRDSYNALWQKQLYSAS. Residues 200–220 traverse the membrane as a helical segment; that stretch reads SLILLFVIPLIIMVTSYLLIL. At 221–268 the chain is on the cytoplasmic side; sequence KTIVKTSRQFHDTPISPTSMSCYSVNHGQIRTHLFERARKRSSRMSAV. A helical transmembrane segment spans residues 269 to 289; the sequence is IVAAFILCWTPYYIIFLGFAF. Over 290 to 298 the chain is Extracellular; the sequence is FQWDNSRTV. The chain crosses the membrane as a helical span at residues 299–319; that stretch reads IYFFTLGTSNCMLNPLIYGAF. The Cytoplasmic segment spans residues 320-407; it reads TIYKVHRGRS…NGKMPTKPPG (88 aa). The segment at 377–407 is disordered; sequence SLTNPHQPVRPSPGINSTTSPNGKMPTKPPG.

The protein belongs to the G-protein coupled receptor 1 family. As to expression, widely expressed in peripheral nervous tissue, gonadal tissue and brain. In the brain, expression is high in the palliovisceral lobe and superior buccal lobe but low in the subvertical lobe, superior and inferior frontal lobe, posterior brachial lobe and pedal lobe. Expressed in stomach, rectum, aorta, heart, salivary gland, branchia, pancreas, radula retractor muscle, branchial vessel but not in white body, esophagus, liver and kidney.

The protein resides in the cell membrane. In terms of biological role, receptor for gonadotropin releasing hormone (GnRH) that mediates the action of GnRH to stimulate the secretion of the gonadotropic hormones luteinizing hormone (LH) and follicle-stimulating hormone (FSH). This receptor mediates its action by association with G-proteins that activate a phosphatidylinositol-calcium second messenger system. Ligand interaction triggers steroidogenesis in spermatozoa and follicles. Appears to be involved in contraction of the radula retractor muscle. The protein is Gonadotropin-releasing hormone receptor of Octopus vulgaris (Common octopus).